The sequence spans 359 residues: Lachesin (359 aa).

The first 25 residues, Met-1–Ala-25, serve as a signal peptide directing secretion. Positions Pro-29–Ser-130 constitute an Ig-like V-type domain. Cys-50 and Cys-113 are joined by a disulfide. Residues Asn-92 and Asn-140 are each glycosylated (N-linked (GlcNAc...) asparagine). Ig-like C2-type domains are found at residues Pro-135–Glu-221 and Pro-226–Asn-317. 2 cysteine pairs are disulfide-bonded: Cys-157-Cys-204 and Cys-247-Cys-303. The GPI-anchor amidated alanine moiety is linked to residue Ala-336. Residues Gly-337–Arg-359 constitute a propeptide, removed in mature form.

Expressed on differentiating neuronal cells from the onset of neurogenesis in both the central and peripheral nervous systems. First detected in the cellularized blastoderm, apart from in the ventral side. Expression persists uniformly in the early ectoderm until the end of gastrulation. From stage 10, expressed in an alternating strong/weak pattern in each segment until stage 15 when it disappears. From stage 11, expressed in subsets of neurons and later subsets of glial cells. From early stage 13, strongly expressed in trachea, hindgut, foregut and the nervous system.

The protein localises to the cell membrane. Its function is as follows. Required for normal tracheal development and maintenance of the trans-epithelial diffusion barrier. Functions as a homophilic cell-adhesion molecule. May play a role in early neuronal differentiation and axon outgrowth. The sequence is that of Lachesin (Lac) from Drosophila melanogaster (Fruit fly).